Consider the following 422-residue polypeptide: Keratan-sulfate endo-1,4-beta-galactosidase (422 aa).

A signal peptide spans 1 to 46 (MRKTKFWLVLSLIATSLSIFACKKDSTATKNPIPEVSKAKASTKLL). The 246-residue stretch at 47 to 292 (NATTVATTDY…YVRVYKLPLF (246 aa)) folds into the GH16 domain. E171 functions as the Nucleophile in the catalytic mechanism. E176 serves as the catalytic Proton donor. Positions 291–406 (LFSNGDFESG…NTTATVYFYK (116 aa)) constitute a CBM-cenC domain.

This sequence belongs to the glycosyl hydrolase 16 family.

It localises to the secreted. The enzyme catalyses Endohydrolysis of (1-&gt;4)-beta-D-galactosidic linkages in keratan sulfate.. In terms of biological role, hydrolyzes internal endo-beta-galactosyl linkages in keratan sulfate and in various neolacto-type glycosphingolipids, producing sulfated and non-sulfated disaccharides, and glucosylceramides respectivly. This chain is Keratan-sulfate endo-1,4-beta-galactosidase, found in Sphingobacterium multivorum.